We begin with the raw amino-acid sequence, 250 residues long: 5-oxoprolinase subunit A 2 (250 aa).

It belongs to the LamB/PxpA family. Forms a complex composed of PxpA, PxpB and PxpC.

It carries out the reaction 5-oxo-L-proline + ATP + 2 H2O = L-glutamate + ADP + phosphate + H(+). In terms of biological role, catalyzes the cleavage of 5-oxoproline to form L-glutamate coupled to the hydrolysis of ATP to ADP and inorganic phosphate. The protein is 5-oxoprolinase subunit A 2 of Bordetella bronchiseptica (strain ATCC BAA-588 / NCTC 13252 / RB50) (Alcaligenes bronchisepticus).